Reading from the N-terminus, the 105-residue chain is Small ribosomal subunit protein uS10c (105 aa).

This sequence belongs to the universal ribosomal protein uS10 family. In terms of assembly, part of the 30S ribosomal subunit.

The protein resides in the plastid. The protein localises to the chloroplast. Involved in the binding of tRNA to the ribosomes. In Porphyra purpurea (Red seaweed), this protein is Small ribosomal subunit protein uS10c.